The primary structure comprises 568 residues: Envelope glycoprotein E (568 aa).

Residues 1-20 (MMPATLAGLALAVTVATMFA) form the signal peptide. Residues 21–422 (QRVDSTTIHH…GGGPGNSKRR (402 aa)) lie on the Virion surface side of the membrane. N-linked (GlcNAc...) asparagine; by host glycans are attached at residues asparagine 88, asparagine 179, and asparagine 248. Cysteine 271 and cysteine 280 form a disulfide bridge. Residues 423–443 (AAVLGAAVWIALTLLILGGLG) form a helical membrane-spanning segment. Topologically, residues 444-568 (AYVAVNKKCL…ANKTFPSQRY (125 aa)) are intravirion. The short motif at 465–468 (KPTL) is the Internalization motif element. Positions 470–534 (THAHTYTSLP…SRRNSFGPTL (65 aa)) are disordered. The segment at 482–497 (GDLSLEQDAEDEDEDE) is acidic. Over residues 486–500 (LEQDAEDEDEDEEEL) the composition is skewed to acidic residues. Over residues 515-526 (KSSRSPSRRSSR) the composition is skewed to basic residues.

Belongs to the alphaherpesvirinae glycoprotein E family. As to quaternary structure, interacts with gI. Post-translationally, phosphorylated on serines within the acidic cluster. Phosphorylation determines whether endocytosed viral gE traffics to the trans-Golgi network or recycles to the cell membrane.

The protein resides in the virion membrane. It is found in the host cell membrane. The protein localises to the host cell junction. It localises to the host Golgi apparatus membrane. Its subcellular location is the host endosome membrane. In terms of biological role, in epithelial cells, the heterodimer gE/gI is required for the cell-to-cell spread of the virus, by sorting nascent virions to cell junctions. Once the virus reaches the cell junctions, virus particles can spread to adjacent cells extremely rapidly through interactions with cellular receptors that accumulate at these junctions. Implicated in basolateral spread in polarized cells. In neuronal cells, gE/gI is essential for the anterograde spread of the infection throughout the host nervous system. Together with US9, the heterodimer gE/gI is involved in the sorting and transport of viral structural components toward axon tips. This is Envelope glycoprotein E (US8) from Psittacid herpesvirus 1 (isolate Amazon parrot/-/97-0001/1997) (PsHV-1).